Consider the following 1086-residue polypeptide: Transcription initiation factor TFIID subunit 2 (1086 aa).

Residues 1–11 are compositionally biased toward polar residues; that stretch reads MDFSEASTSGD. Disordered stretches follow at residues 1-53 and 1064-1086; these read MDFS…PPPV and GYEA…NLMQ. Pro residues-rich tracts occupy residues 19 to 36 and 44 to 53; these read PFPP…PPLA and APPPLQPPPV. Residues 1067–1078 are compositionally biased toward basic and acidic residues; the sequence is AARRSPPRRDFG.

The protein belongs to the TAF2 family. As to quaternary structure, component of the TFIID basal transcription factor complex, composed of TATA-box-binding protein tbp-1, and a number of TBP-associated factors (TAFs).

The protein localises to the nucleus. The TFIID basal transcription factor complex plays a major role in the initiation of RNA polymerase II (Pol II)-dependent transcription. TFIID recognizes and binds promoters via its subunit tbp-1, a TATA-box-binding protein, and promotes assembly of the pre-initiation complex (PIC). The TFIID complex consists of tbp-1 and TBP-associated factors (TAFs), including taf-2. May regulate RNA polymerase II activity and thereby may control transcription initiation by RNA polymerase II. In Caenorhabditis elegans, this protein is Transcription initiation factor TFIID subunit 2.